The chain runs to 195 residues: Imidazoleglycerol-phosphate dehydratase (195 aa).

It belongs to the imidazoleglycerol-phosphate dehydratase family.

The protein localises to the cytoplasm. The catalysed reaction is D-erythro-1-(imidazol-4-yl)glycerol 3-phosphate = 3-(imidazol-4-yl)-2-oxopropyl phosphate + H2O. It participates in amino-acid biosynthesis; L-histidine biosynthesis; L-histidine from 5-phospho-alpha-D-ribose 1-diphosphate: step 6/9. This is Imidazoleglycerol-phosphate dehydratase from Roseobacter denitrificans (strain ATCC 33942 / OCh 114) (Erythrobacter sp. (strain OCh 114)).